The primary structure comprises 704 residues: mRNA (2'-O-methyladenosine-N(6)-)-methyltransferase (704 aa).

The disordered stretch occupies residues 1-33; sequence MANENHGSPREEASLLSHSPGTSNQSQPCSPKP. Positions 16–29 are enriched in polar residues; it reads LSHSPGTSNQSQPC. A Phosphoserine modification is found at Ser-30. The 35-residue stretch at 43–77 folds into the WW domain; it reads ELVHAGWEKCWSRRENRPYYFNRFTNQSLWEMPVL. A disordered region spans residues 88–151; it reads GLNATPLPQD…PSSPSIPGTP (64 aa). A Nuclear localization signal motif is present at residues 109 to 113; that stretch reads KPRKR. Residue Ser-116 is modified to Phosphoserine. The span at 136–149 shows a compositional bias: polar residues; sequence PTGQSVPSSPSIPG. Thr-152 carries the post-translational modification Phosphothreonine. The substrate site is built by Arg-235 and Arg-265. 553 to 556 is a binding site for S-adenosyl-L-methionine; sequence NPPF. Residues Glu-558 and 588-592 each bind substrate; that span reads WREPP. 614-616 contacts S-adenosyl-L-methionine; sequence FEH. The segment at 663–704 is disordered; it reads LSAAYRQSGRSHSSGSSSSSSSEAKDRDSGREQGPSREPHPT. Residues 669–684 carry the Nuclear localization signal motif; the sequence is QSGRSHSSGSSSSSSS. Residues 670 to 684 show a composition bias toward low complexity; the sequence is SGRSHSSGSSSSSSS. The segment covering 685–704 has biased composition (basic and acidic residues); that stretch reads EAKDRDSGREQGPSREPHPT.

This sequence belongs to the CAPAM family. Interacts with POLR2A; interacts with the phosphorylated C-terminal domain (CTD) of POLR2A. Ubiquitous.

The protein resides in the nucleus. The enzyme catalyses a 5'-end (N(7)-methyl 5'-triphosphoguanosine)-(2'-O-methyladenosine) in mRNA + S-adenosyl-L-methionine = a 5'-end (N(7)-methyl 5'-triphosphoguanosine)-(N(6),2'-O-dimethyladenosine) in mRNA + S-adenosyl-L-homocysteine + H(+). With respect to regulation, cap-specific adenosine methyltransferase activity is inhibited by zinc. Its function is as follows. Cap-specific adenosine methyltransferase that catalyzes formation of N(6),2'-O-dimethyladenosine cap (m6A(m)) by methylating the adenosine at the second transcribed position of capped mRNAs. Recruited to the early elongation complex of RNA polymerase II (RNAPII) via interaction with POLR2A and mediates formation of m6A(m) co-transcriptionally. In Homo sapiens (Human), this protein is mRNA (2'-O-methyladenosine-N(6)-)-methyltransferase.